The primary structure comprises 147 residues: MASFRLLLLCLAGLVFVSEASPAGAGESKCPLMVKVLDAVRGSPAANVGVKVFKKAADETWEPFASGKTSDSGELHGLTTEDKFVEGLYKVELDTKSYWKSLGISPFHEYAEVVFTANDSGLRHYTIAALLSPYSYSTTALVSSPKE.

The signal sequence occupies residues 1–20 (MASFRLLLLCLAGLVFVSEA). C30 carries the sulfocysteine modification. K35 contacts L-thyroxine. E62 carries the post-translational modification 4-carboxyglutamate. S72 bears the Phosphoserine mark. E74 provides a ligand contact to L-thyroxine. N-linked (GlcNAc...) asparagine glycosylation occurs at N118. S137 is a binding site for L-thyroxine.

It belongs to the transthyretin family. As to quaternary structure, homotetramer. Dimer of dimers. In the homotetramer, subunits assemble around a central channel that can accommodate two ligand molecules. Interacts with RBP4. In terms of processing, sulfonation of the reactive cysteine Cys-30 enhances the stability of the native conformation of TTR, avoiding misassembly of the protein leading to amyloid formation. As to expression, highly expressed in the choroid plexus.

The protein localises to the secreted. Thyroid hormone-binding protein. Probably transports thyroxine from the bloodstream to the brain. The protein is Transthyretin (TTR) of Ovis aries (Sheep).